Consider the following 227-residue polypeptide: Translation initiation factor 6 (227 aa).

Belongs to the eIF-6 family.

Functionally, binds to the 50S ribosomal subunit and prevents its association with the 30S ribosomal subunit to form the 70S initiation complex. The chain is Translation initiation factor 6 from Staphylothermus marinus (strain ATCC 43588 / DSM 3639 / JCM 9404 / F1).